A 174-amino-acid polypeptide reads, in one-letter code: Transcription antitermination protein NusB (174 aa).

The segment covering 1-11 (MSEVETTNDQT) has biased composition (polar residues). Residues 1–29 (MSEVETTNDQTPAPKRKDKKPSRSQLRSA) form a disordered region.

This sequence belongs to the NusB family.

In terms of biological role, involved in transcription antitermination. Required for transcription of ribosomal RNA (rRNA) genes. Binds specifically to the boxA antiterminator sequence of the ribosomal RNA (rrn) operons. The polypeptide is Transcription antitermination protein NusB (Marinomonas sp. (strain MWYL1)).